The primary structure comprises 203 residues: Probable proteasome subunit beta type-1 (203 aa).

Positions 1–10 (MMSNEKEMTG) are cleaved as a propeptide — removed in mature form. Thr-11 functions as the Nucleophile in the catalytic mechanism.

Belongs to the peptidase T1B family. The 26S proteasome consists of a 20S proteasome core and two 19S regulatory subunits. The 20S proteasome core is composed of 28 subunits that are arranged in four stacked rings, resulting in a barrel-shaped structure. The two end rings are each formed by seven alpha subunits, and the two central rings are each formed by seven beta subunits. The catalytic chamber with the active sites is on the inside of the barrel.

The protein resides in the cytoplasm. It is found in the nucleus. The catalysed reaction is Cleavage of peptide bonds with very broad specificity.. Functionally, the proteasome degrades poly-ubiquitinated proteins in the cytoplasm and in the nucleus. It is essential for the regulated turnover of proteins and for the removal of misfolded proteins. The proteasome is a multicatalytic proteinase complex that is characterized by its ability to cleave peptides with Arg, Phe, Tyr, Leu, and Glu adjacent to the leaving group at neutral or slightly basic pH. It has an ATP-dependent proteolytic activity. This chain is Probable proteasome subunit beta type-1 (PRE3), found in Encephalitozoon cuniculi (strain GB-M1) (Microsporidian parasite).